Here is a 560-residue protein sequence, read N- to C-terminus: Formate--tetrahydrofolate ligase (560 aa).

Position 69 to 76 (69 to 76 (TPAGEGKS)) interacts with ATP.

It belongs to the formate--tetrahydrofolate ligase family.

It carries out the reaction (6S)-5,6,7,8-tetrahydrofolate + formate + ATP = (6R)-10-formyltetrahydrofolate + ADP + phosphate. The protein operates within one-carbon metabolism; tetrahydrofolate interconversion. This is Formate--tetrahydrofolate ligase from Listeria welshimeri serovar 6b (strain ATCC 35897 / DSM 20650 / CCUG 15529 / CIP 8149 / NCTC 11857 / SLCC 5334 / V8).